Here is a 151-residue protein sequence, read N- to C-terminus: Putative coiled-coil-helix-coiled-coil-helix domain-containing protein CHCHD2P9, mitochondrial (151 aa).

The transit peptide at 1-9 (MPRGSRSRT) directs the protein to the mitochondrion. 2 disordered regions span residues 1–50 (MPRG…AAAP) and 75–110 (TQGH…PAQQ). The segment covering 10 to 26 (SRMAPPASRAPQMRAAP) has biased composition (low complexity). Pro residues predominate over residues 27 to 38 (RPAPVAQPPAAA). Composition is skewed to low complexity over residues 39-50 (PPSAVGSSAAAP) and 100-110 (QEPQGTQPAQQ). In terms of domain architecture, CHCH spans 111 to 151 (QQPCFYGIKQFLECAQNQGDIKLCEDFSKVLKQCRLAKGLA). 2 consecutive short sequence motifs (cx9C motif) follow at residues 114-124 (CFYGIKQFLEC) and 134-144 (CEDFSKVLKQC). 2 cysteine pairs are disulfide-bonded: Cys-114–Cys-144 and Cys-124–Cys-134.

Its subcellular location is the mitochondrion. The chain is Putative coiled-coil-helix-coiled-coil-helix domain-containing protein CHCHD2P9, mitochondrial (CHCHD2P9) from Homo sapiens (Human).